The chain runs to 794 residues: Protein IQ-DOMAIN 32 (794 aa).

Residues 15–101 are disordered; the sequence is CSGGDDTSAD…QSFSVDEKKS (87 aa). 2 stretches are compositionally biased toward polar residues: residues 23 to 33 and 56 to 65; these read ADPNSTALENK and SVVSETTPAS. Residues S78, S80, S142, S193, and S195 each carry the phosphoserine modification. Residues 80–95 are compositionally biased toward polar residues; sequence SPDNNNVSEKQQQSFS. 2 consecutive IQ domains span residues 214-242 and 243-265; these read DESVIVVIQAAVRGFLARRELLRSKKVIK and LQAAVRGHLVRSQAMGSLRCVQA. The tract at residues 230–241 is calmodulin-binding; that stretch reads ARRELLRSKKVI. Positions 277–296 are disordered; sequence HSTKDGSRVSATSDKSEPNA. S369 is modified (phosphoserine). The tract at residues 375–417 is disordered; the sequence is VNSDSTVENKTETDMPSYEASKVEGQNVELSETEKMSQYDSPE. The residue at position 459 (S459) is a Phosphoserine. Disordered stretches follow at residues 472-555 and 578-794; these read ELTS…RVEA and ATSM…KWQR. Positions 473–486 are enriched in polar residues; sequence LTSSTGSNKAMTLS. Basic and acidic residues predominate over residues 487–500; it reads SKDDVLGEEGKTDI. A phosphoserine mark is found at S502 and S544. Basic and acidic residues-rich tracts occupy residues 539-555 and 585-607; these read TLEKKSDAEGAEPRVEA and EDPKEKVENAKDEVEISATHHEP. Over residues 643–654 the composition is skewed to low complexity; sequence SQATPASQASSS. The Nuclear localization signal motif lies at 657–664; sequence ARKGKSEK. The span at 768-786 shows a compositional bias: polar residues; sequence NGKQVSPRIQRSASQAQQG.

It belongs to the IQD family. In terms of assembly, binds to multiple calmodulin (CaM) in the presence of Ca(2+) and CaM-like proteins.

The protein localises to the nucleus. It localises to the cytoplasm. Its subcellular location is the cytoskeleton. Its function is as follows. May be involved in cooperative interactions with calmodulins or calmodulin-like proteins. Recruits calmodulin proteins to microtubules, thus being a potential scaffold in cellular signaling and trafficking. May associate with nucleic acids and regulate gene expression at the transcriptional or post-transcriptional level. The sequence is that of Protein IQ-DOMAIN 32 from Arabidopsis thaliana (Mouse-ear cress).